The chain runs to 1192 residues: Protein argonaute 13 (1192 aa).

Residues 183-296 (TVIQFVEEFL…LPMEVCKIVE (114 aa)) enclose the PAZ domain. The Piwi domain occupies 472–770 (LLIVILLEVS…AASHAHCCIK (299 aa)).

This sequence belongs to the argonaute family. Ago subfamily.

Probably involved in the RNA silencing pathway. May bind to short RNAs such as microRNAs (miRNAs) or short interfering RNAs (siRNAs), and represses the translation of mRNAs which are complementary to them. The sequence is that of Protein argonaute 13 (AGO13) from Oryza sativa subsp. japonica (Rice).